Here is an 874-residue protein sequence, read N- to C-terminus: MAAKKSGASKELSPMMRQYLDVKKQYADYLLLFRVGDFYETFFDDAATISAAVNIVLTRRSNGSAPDIPMAGFPYHASEGYIARLVRKGFKVAVCEQVEDPAEAKGIVKREITEIVTPGVTYSDSILEDRHNNYLAAVAFLKEGRTPVAGIAYLDVTTAEFRIASLPPHSLRDTILSLGPAELLVSSSEKSRLEDLVRGYATGMLVTGLDDWMFSEEQAETVLSRQFRTHSLKGFGIEGNRAGRVAAGVVLQYLDETRQSRRAYITRISEMQGGEFMTLDLQTKRNLEIVSSMQDGSPHGSLLQVMDRTVNPMGARLIRRWLQRPLRVAEAIAERHDGVEELLQSSELSEGVRCSLSEINDLERSLARIATFRTSPREVLQMGRSLAVFPQLRDLLLPALSARLRSLAAVLQPLPELVSEIERSVDPECGATVRDGGYIRSGCNDELDELRSVSSMAKERLMDIQREEREKTGISSLKVQYNRVFGYYIEISRANLDRVPEGYMKKQTLVNAERYTIPALKAYEEKILNAEERSLRLEAEIFQALCASIAERAASIQESALAIAEIDTLASFALSAKEYGYCKPEMKEHEGLLITEGRHPVLERIMKPDEPFVKNDCHFDGQQRMLMITGPNMAGKSSYLRQTGLIVLLAQAGSFVPAERAEIGMVDRIFTRVGASDNLASGESTFLVEMNEAASILNNATSSSLILLDEIGRGTSTFDGMSIAWSMSEYIITRLGARTLFATHYHELSELEERLPGVVNYNATVVESGERVIFLRKIVRGSTDNSYGIEVARMAGMPNEVIERAREIMSGLERKDVSFADRSFSVQENMQISLFDEVDSRLKTALQDLDLERLTPIEALLELEKLQKLLRGHS.

630 to 637 is a binding site for ATP; it reads GPNMAGKS.

Belongs to the DNA mismatch repair MutS family.

Its function is as follows. This protein is involved in the repair of mismatches in DNA. It is possible that it carries out the mismatch recognition step. This protein has a weak ATPase activity. The polypeptide is DNA mismatch repair protein MutS (Chlorobium phaeovibrioides (strain DSM 265 / 1930) (Prosthecochloris vibrioformis (strain DSM 265))).